Consider the following 118-residue polypeptide: MLMHSILILLVIIITTYFTRIWPFMVFNSKNPPNDFVRYLGRALSCSVIGMLVVYCFKDIHVLKPPYGINEITAFLSVILLHRIFKVFVLSITLPTILYMVLVQSHALEKAFFNIHVS.

3 consecutive transmembrane segments (helical) span residues 6–26 (ILIL…PFMV), 43–63 (ALSC…IHVL), and 84–104 (IFKV…VLVQ).

This sequence belongs to the AzlD/HI_1737/HP1330 family.

The protein localises to the cell membrane. This is an uncharacterized protein from Helicobacter pylori (strain J99 / ATCC 700824) (Campylobacter pylori J99).